A 51-amino-acid polypeptide reads, in one-letter code: Sperm protamine P1 (51 aa).

Low complexity predominate over residues 1–13; that stretch reads MARYRCCRSQSRS. The interval 1–30 is disordered; that stretch reads MARYRCCRSQSRSRYYRQRQRSRRRRRRSC. The segment covering 14–30 has biased composition (basic residues); that stretch reads RYYRQRQRSRRRRRRSC. A disulfide bond links cysteine 40 and cysteine 48.

The protein belongs to the protamine P1 family. As to quaternary structure, cross-linked by interchain disulfide bonds around the DNA-helix. In terms of processing, phosphorylated by SRPK1. In terms of tissue distribution, testis.

It is found in the nucleus. The protein localises to the chromosome. Protamines substitute for histones in the chromatin of sperm during the haploid phase of spermatogenesis. They compact sperm DNA into a highly condensed, stable and inactive complex. The sequence is that of Sperm protamine P1 (PRM1) from Homo sapiens (Human).